The following is a 203-amino-acid chain: Probable cytochrome c oxidase subunit 3 (203 aa).

A run of 5 helical transmembrane segments spans residues 30-50 (IVWLSSELMFFAGLFAMYFTA), 70-90 (AVPVTLVLIASSFTCQMGVFA), 102-122 (WYVITFLMGLFFVLGQGYEYY), 142-162 (LATGFHDLHVTGGLVAFIFLL), and 179-199 (IVVSYYWHFVDIVWIALFTVI).

It belongs to the cytochrome c oxidase subunit 3 family.

The protein localises to the cell membrane. The catalysed reaction is 4 Fe(II)-[cytochrome c] + O2 + 8 H(+)(in) = 4 Fe(III)-[cytochrome c] + 2 H2O + 4 H(+)(out). This chain is Probable cytochrome c oxidase subunit 3 (ctaE), found in Mycolicibacterium paratuberculosis (strain ATCC BAA-968 / K-10) (Mycobacterium paratuberculosis).